The chain runs to 91 residues: Bacterial microcompartment shell protein PduJ (91 aa).

Positions 4-88 (ALGLVETKGL…PHSDVEAILP (85 aa)) constitute a BMC domain.

It belongs to the bacterial microcompartments protein family. As to quaternary structure, homohexamer with a central pore. Interacts with PduP, which targets PduP to the BMC. Interacts with shell protein PduA.

It localises to the bacterial microcompartment. Its pathway is polyol metabolism; 1,2-propanediol degradation. Functionally, one of the major shell proteins of the bacterial microcompartment (BMC) dedicated to 1,2-propanediol (1,2-PD) degradation. At least one of PduA or PduJ is required for BMC assembly; it must be encoded as the first gene in the pdu operon. Required for structural integrity of BMCs and to mitigate propionaldehyde toxicity, probably joins facets responsible for BMC closure. Probably the hub for binding multiple enzymes to the interior of the BMC. In terms of biological role, expression of a cosmid containing the full 21-gene pdu operon in E.coli allows E.coli to grow on 1,2-PD with the appearance of BMCs in its cytoplasm. Overexpression of this protein leads to an internal structure with a whorled architecture. The 1,2-PD-specific bacterial microcompartment (BMC) concentrates low levels of 1,2-PD catabolic enzymes, concentrates volatile reaction intermediates thus enhancing pathway flux and keeps the level of toxic, mutagenic propionaldehyde low. The protein is Bacterial microcompartment shell protein PduJ of Citrobacter freundii.